The following is a 262-amino-acid chain: Thiamine thiazole synthase (262 aa).

Residues S40, 59 to 60, G67, V133, and 159 to 161 each bind NAD(+); these read ER and HID. Residues D161 and H176 each coordinate Fe cation. NAD(+)-binding residues include S179 and M226. Glycine is bound at residue R236.

The protein belongs to the THI4 family. In terms of assembly, homooctamer; tetramer of dimers. Fe(2+) serves as cofactor.

It carries out the reaction hydrogen sulfide + glycine + NAD(+) = ADP-5-ethyl-4-methylthiazole-2-carboxylate + nicotinamide + 3 H2O + H(+). It functions in the pathway cofactor biosynthesis; thiamine diphosphate biosynthesis. Functionally, involved in the biosynthesis of the thiazole moiety of thiamine. Catalyzes the conversion of NAD and glycine to adenosine diphosphate 5-(2-hydroxyethyl)-4-methylthiazole-2-carboxylate (ADT), an adenylated thiazole intermediate, using free sulfide as a source of sulfur. This Methanococcus maripaludis (strain C7 / ATCC BAA-1331) protein is Thiamine thiazole synthase.